The sequence spans 712 residues: tRNA 5-methylaminomethyl-2-thiouridine biosynthesis bifunctional protein MnmC (712 aa).

The tract at residues 1-268 (MPNMRHRVNS…RRALRHAQSD (268 aa)) is tRNA (mnm(5)s(2)U34)-methyltransferase. The tract at residues 292–712 (IGGGVASTHL…MRKLIKGKAL (421 aa)) is FAD-dependent cmnm(5)s(2)U34 oxidoreductase.

The protein in the N-terminal section; belongs to the methyltransferase superfamily. tRNA (mnm(5)s(2)U34)-methyltransferase family. In the C-terminal section; belongs to the DAO family. FAD serves as cofactor.

The protein resides in the cytoplasm. It carries out the reaction 5-aminomethyl-2-thiouridine(34) in tRNA + S-adenosyl-L-methionine = 5-methylaminomethyl-2-thiouridine(34) in tRNA + S-adenosyl-L-homocysteine + H(+). In terms of biological role, catalyzes the last two steps in the biosynthesis of 5-methylaminomethyl-2-thiouridine (mnm(5)s(2)U) at the wobble position (U34) in tRNA. Catalyzes the FAD-dependent demodification of cmnm(5)s(2)U34 to nm(5)s(2)U34, followed by the transfer of a methyl group from S-adenosyl-L-methionine to nm(5)s(2)U34, to form mnm(5)s(2)U34. This is tRNA 5-methylaminomethyl-2-thiouridine biosynthesis bifunctional protein MnmC from Shewanella sediminis (strain HAW-EB3).